Reading from the N-terminus, the 868-residue chain is DNA mismatch repair protein MutS (868 aa).

620–627 (GPNMGGKS) is an ATP binding site.

The protein belongs to the DNA mismatch repair MutS family.

This protein is involved in the repair of mismatches in DNA. It is possible that it carries out the mismatch recognition step. This protein has a weak ATPase activity. This is DNA mismatch repair protein MutS from Xylella fastidiosa (strain 9a5c).